We begin with the raw amino-acid sequence, 302 residues long: Stanniocalcin-2 (302 aa).

The N-terminal stretch at 1–24 is a signal peptide; sequence MCAERLGHFMTLALVLATIDPARG. Positions 23-44 are disordered; that stretch reads RGTDATNPPEGPQDRSSQQKGR. Residue asparagine 73 is glycosylated (N-linked (GlcNAc...) asparagine). The segment at 218–302 is disordered; sequence PPTAPPERQP…EQSEYSDIRR (85 aa). The segment covering 227-264 has biased composition (basic and acidic residues); that stretch reads PQVDRAKLSRAHHGEAGHHLPEPSSRETGRGAKGERGS. Residues serine 250 and serine 251 each carry the phosphoserine modification. Threonine 254 is modified (phosphothreonine).

The protein belongs to the stanniocalcin family. In terms of assembly, homodimer; disulfide-linked.

The protein resides in the secreted. Functionally, has an anti-hypocalcemic action on calcium and phosphate homeostasis. The chain is Stanniocalcin-2 (STC2) from Macaca nemestrina (Pig-tailed macaque).